The following is a 725-amino-acid chain: MSASDLTSVQAGAPQGRRQILVTSALPYANGQIHIGHLVEYIQTDIWVRTMRMHGHEIYYIGADDTHGTPVMLRAEQEGVSPKQLIERVWREHKRDFDSFGVSFDNFYTTDSDENRVLSETIYLALKEAGFIAEREIEQAYDPVRQMFLPDRFIKGECPKCHAKDQYGDSCEVCGTTYQPTDLIHPYSVVSGAAPVRKTSTHYFFRLSDPRCEAFLREWVSGLAQPEATNKMREWLGEAGEAKLADWDISRDAPYFGFEIPGAPGKYFYVWLDAPVGYYASFKNLCERRGLDFDAWIRKDSTTEQYHFIGKDILYFHTLFWPAMLEFSGHRTPTNVFAHGFLTVDGAKMSKSRGTFITAQSYIDTGLNPEWLRYYFAAKLNATMEDIDLNLEDFQARVNSDLVGKYVNIASRAAGFLLKRFDGRVQASAMNHPLLATLRGAIPQIAAHYEAREYGRALRQTMELADAVNGYVDSAKPWELAKDPANAVALHETCSVSLEAFRLLSLALKPVLPRVAQGVEAFLGIAPLTWADAGMPLSPEQPVRAYQHLMTRVDPKQIDALLAANRGSLQGTAAAAEAGAANGNGAGSKNGKGAKAAAQPAASAANADDGASPIISIDDFAKIDLRIAKIVACQAVEGSDKLLQLTLDVGEERTRNVFSGIKSAYRPEQLVGKLTVMVANLAPRKMKFGLSEGMVLAASAADEKAEPGLYILEPHSGAKPGMRVK.

The 'HIGH' region motif lies at 27 to 37 (PYANGQIHIGH). Zn(2+) contacts are provided by C158, C161, C171, and C174. Residues 348–352 (KMSKS) carry the 'KMSKS' region motif. Position 351 (K351) interacts with ATP. The 107-residue stretch at 619–725 (DFAKIDLRIA…SGAKPGMRVK (107 aa)) folds into the tRNA-binding domain.

Belongs to the class-I aminoacyl-tRNA synthetase family. MetG type 1 subfamily. As to quaternary structure, homodimer. Requires Zn(2+) as cofactor.

It is found in the cytoplasm. The catalysed reaction is tRNA(Met) + L-methionine + ATP = L-methionyl-tRNA(Met) + AMP + diphosphate. Its function is as follows. Is required not only for elongation of protein synthesis but also for the initiation of all mRNA translation through initiator tRNA(fMet) aminoacylation. In Burkholderia pseudomallei (strain 668), this protein is Methionine--tRNA ligase.